The chain runs to 295 residues: Protein transport protein SSO2 (295 aa).

A compositionally biased stretch (low complexity) spans 1–18; the sequence is MSNPYQNSQNGYQQNNSY. The disordered stretch occupies residues 1–31; that stretch reads MSNPYQNSQNGYQQNNSYELNNYPNKQYSSS. Residues 1–270 lie on the Cytoplasmic side of the membrane; it reads MSNPYQNSQN…SAKSARKKKL (270 aa). A compositionally biased stretch (polar residues) spans 19-31; that stretch reads ELNNYPNKQYSSS. A coiled-coil region spans residues 33–110; sequence EDDFVQFMNE…NRIKNVQTQA (78 aa). One can recognise a t-SNARE coiled-coil homology domain in the interval 196 to 258; sequence LNEVQVRHRE…EQGVGHTNKA (63 aa). A helical; Anchor for type IV membrane protein membrane pass occupies residues 271–291; that stretch reads WCFFICLLIVIILAVILGAYF. The Extracellular portion of the chain corresponds to 292 to 295; the sequence is GTRK.

It belongs to the syntaxin family.

It is found in the membrane. Late secretory t-SNARE protein required for secretion and proper cytokinesis. Plays an important role in the secretion of virulence-associated extracellular enzymes and vesicle-mediated polarized hyphal growth. This is Protein transport protein SSO2 (SSO2) from Candida albicans (strain SC5314 / ATCC MYA-2876) (Yeast).